A 134-amino-acid polypeptide reads, in one-letter code: Large ribosomal subunit protein eL27 (134 aa).

Residues 5 to 40 (LKSGKVVVVLSGRFAGKKAVIVRNFDDGTSSRPYGH) form the KOW domain.

This sequence belongs to the eukaryotic ribosomal protein eL27 family.

This Pyrobotrys stellatus (Green alga) protein is Large ribosomal subunit protein eL27 (RPL27).